We begin with the raw amino-acid sequence, 252 residues long: uncharacterized protein (252 aa).

An NADP(+)-binding site is contributed by 9–33; it reads LITGGSAGIGLELAKRLLELGNEVI. Position 139 (Ser-139) interacts with substrate. The Proton acceptor role is filled by Tyr-152.

Belongs to the short-chain dehydrogenases/reductases (SDR) family.

The protein resides in the cytoplasm. This is an uncharacterized protein from Bacillus subtilis (strain 168).